The sequence spans 296 residues: Zinc finger CCCH-type antiviral protein 1-like (296 aa).

At Ala2 the chain carries N-acetylalanine. 2 consecutive C3H1-type zinc fingers follow at residues 111–136 (LCRR…HDIH) and 198–219 (VCKS…HQLI).

The protein is Zinc finger CCCH-type antiviral protein 1-like (Zc3hav1l) of Mus musculus (Mouse).